Consider the following 150-residue polypeptide: Phosphoribosyl-AMP cyclohydrolase (150 aa).

A Mg(2+)-binding site is contributed by Asp-93. Residue Cys-94 participates in Zn(2+) binding. Mg(2+) is bound by residues Asp-95 and Asp-97. Residues Cys-112 and Cys-119 each coordinate Zn(2+).

This sequence belongs to the PRA-CH family. As to quaternary structure, homodimer. Mg(2+) is required as a cofactor. Requires Zn(2+) as cofactor.

The protein resides in the cytoplasm. It catalyses the reaction 1-(5-phospho-beta-D-ribosyl)-5'-AMP + H2O = 1-(5-phospho-beta-D-ribosyl)-5-[(5-phospho-beta-D-ribosylamino)methylideneamino]imidazole-4-carboxamide. The protein operates within amino-acid biosynthesis; L-histidine biosynthesis; L-histidine from 5-phospho-alpha-D-ribose 1-diphosphate: step 3/9. Functionally, catalyzes the hydrolysis of the adenine ring of phosphoribosyl-AMP. The polypeptide is Phosphoribosyl-AMP cyclohydrolase (Rhizobium etli (strain CIAT 652)).